A 1342-amino-acid chain; its full sequence is DNA-directed RNA polymerase subunit beta (1342 aa).

This sequence belongs to the RNA polymerase beta chain family. The RNAP catalytic core consists of 2 alpha, 1 beta, 1 beta' and 1 omega subunit. When a sigma factor is associated with the core the holoenzyme is formed, which can initiate transcription.

It catalyses the reaction RNA(n) + a ribonucleoside 5'-triphosphate = RNA(n+1) + diphosphate. In terms of biological role, DNA-dependent RNA polymerase catalyzes the transcription of DNA into RNA using the four ribonucleoside triphosphates as substrates. This Serratia proteamaculans (strain 568) protein is DNA-directed RNA polymerase subunit beta.